The following is a 169-amino-acid chain: NAD(P)H-quinone oxidoreductase subunit J, chloroplastic (169 aa).

The protein belongs to the complex I 30 kDa subunit family. As to quaternary structure, NDH is composed of at least 16 different subunits, 5 of which are encoded in the nucleus.

The protein resides in the plastid. It localises to the chloroplast thylakoid membrane. It carries out the reaction a plastoquinone + NADH + (n+1) H(+)(in) = a plastoquinol + NAD(+) + n H(+)(out). The catalysed reaction is a plastoquinone + NADPH + (n+1) H(+)(in) = a plastoquinol + NADP(+) + n H(+)(out). NDH shuttles electrons from NAD(P)H:plastoquinone, via FMN and iron-sulfur (Fe-S) centers, to quinones in the photosynthetic chain and possibly in a chloroplast respiratory chain. The immediate electron acceptor for the enzyme in this species is believed to be plastoquinone. Couples the redox reaction to proton translocation, and thus conserves the redox energy in a proton gradient. The sequence is that of NAD(P)H-quinone oxidoreductase subunit J, chloroplastic from Anthoceros angustus (Hornwort).